The primary structure comprises 184 residues: Thylakoid membrane protein slr0575 (184 aa).

Transmembrane regions (helical) follow at residues 5-25 (ISLAAVGLTVGGILTITGFVA) and 31-51 (ATLNLAGFFYGIPLVLGGLAL).

The protein localises to the cellular thylakoid membrane. This is Thylakoid membrane protein slr0575 from Synechocystis sp. (strain ATCC 27184 / PCC 6803 / Kazusa).